Reading from the N-terminus, the 104-residue chain is UPF0145 protein RD1_2695 (104 aa).

It belongs to the UPF0145 family.

In Roseobacter denitrificans (strain ATCC 33942 / OCh 114) (Erythrobacter sp. (strain OCh 114)), this protein is UPF0145 protein RD1_2695.